The following is a 338-amino-acid chain: Phenylalanine--tRNA ligase alpha subunit (338 aa).

Glu253 provides a ligand contact to Mg(2+).

This sequence belongs to the class-II aminoacyl-tRNA synthetase family. Phe-tRNA synthetase alpha subunit type 1 subfamily. In terms of assembly, tetramer of two alpha and two beta subunits. Mg(2+) is required as a cofactor.

The protein resides in the cytoplasm. The catalysed reaction is tRNA(Phe) + L-phenylalanine + ATP = L-phenylalanyl-tRNA(Phe) + AMP + diphosphate + H(+). The sequence is that of Phenylalanine--tRNA ligase alpha subunit from Legionella pneumophila (strain Lens).